The primary structure comprises 796 residues: Conidiophore development regulator abaA (796 aa).

A DNA-binding region (TEA) is located at residues 133–207 (GKDGEPVWSD…QVLDSFLKGD (75 aa)). The segment at 215 to 254 (REQSDRSTAQTQPVGPRWRTSMDHLPSSHYGTHATSSYPE) is disordered. The segment covering 243–252 (HYGTHATSSY) has biased composition (polar residues). The interval 341-362 (LSDVNDPLNCEIILLETNLELM) is leucine-zipper-like. Residues 612-643 (EGLSDKTAPTSVLDPFPNLTQQTTSQTAGINV) form a disordered region. Residues 629-643 (NLTQQTTSQTAGINV) are compositionally biased toward polar residues.

This sequence belongs to the TEC1 family.

The protein localises to the nucleus. In terms of biological role, brlA, abaA and wetA are pivotal regulators of conidiophore development and conidium maturation. They act individually and together to regulate their own expression and that of numerous other sporulation-specific gene. Controls temporal and spatial specificity in Aspergillus development. Directs the differentiation of phialides and is continuously required for maintenance of their function. Expression of abaA leads to activation of brlA and wetA, cessation of vegetative growth, and accentuated cellular vacuolization. Binds to the sequence 5'-CATTCY-3', where Y is a pyrimidine, making both major- and minor-groove contacts. Multiple abaA binding sites are present in the cis-acting regulatory regions of several developmentally controlled structural genes as well as those of the upstream regulatory gene brlA, the downstream regulatory gene wetA, and abaA itself. This is Conidiophore development regulator abaA from Emericella nidulans (strain FGSC A4 / ATCC 38163 / CBS 112.46 / NRRL 194 / M139) (Aspergillus nidulans).